We begin with the raw amino-acid sequence, 243 residues long: 7-cyano-7-deazaguanine synthase (243 aa).

18 to 28 is a binding site for ATP; the sequence is FSGGQDSATCL. Zn(2+)-binding residues include Cys206, Cys221, Cys224, and Cys227.

The protein belongs to the QueC family. Requires Zn(2+) as cofactor.

The enzyme catalyses 7-carboxy-7-deazaguanine + NH4(+) + ATP = 7-cyano-7-deazaguanine + ADP + phosphate + H2O + H(+). It functions in the pathway purine metabolism; 7-cyano-7-deazaguanine biosynthesis. Its function is as follows. Catalyzes the ATP-dependent conversion of 7-carboxy-7-deazaguanine (CDG) to 7-cyano-7-deazaguanine (preQ(0)). The polypeptide is 7-cyano-7-deazaguanine synthase (Methylorubrum extorquens (strain CM4 / NCIMB 13688) (Methylobacterium extorquens)).